The chain runs to 345 residues: Anthranilate phosphoribosyltransferase (345 aa).

5-phospho-alpha-D-ribose 1-diphosphate-binding positions include Gly-79, 82–83, Thr-87, 89–92, 106–114, and Ser-118; these read GD, NVST, and KHGNRAVSG. Position 79 (Gly-79) interacts with anthranilate. Residue Ser-91 participates in Mg(2+) binding. An anthranilate-binding site is contributed by Asn-109. Residue Arg-164 participates in anthranilate binding. Residues Asp-223 and Glu-224 each coordinate Mg(2+).

It belongs to the anthranilate phosphoribosyltransferase family. In terms of assembly, homodimer. Mg(2+) is required as a cofactor.

It catalyses the reaction N-(5-phospho-beta-D-ribosyl)anthranilate + diphosphate = 5-phospho-alpha-D-ribose 1-diphosphate + anthranilate. Its pathway is amino-acid biosynthesis; L-tryptophan biosynthesis; L-tryptophan from chorismate: step 2/5. Its function is as follows. Catalyzes the transfer of the phosphoribosyl group of 5-phosphorylribose-1-pyrophosphate (PRPP) to anthranilate to yield N-(5'-phosphoribosyl)-anthranilate (PRA). The sequence is that of Anthranilate phosphoribosyltransferase from Saccharolobus islandicus (strain L.S.2.15 / Lassen #1) (Sulfolobus islandicus).